A 633-amino-acid chain; its full sequence is Dynein axonemal assembly factor 1 (633 aa).

Residues 1 to 80 (MHPEASEPPV…SRDDRDDRGP (80 aa)) are disordered. Residues 22 to 42 (AGDHGDAGPGVRKEEINETKE) show a composition bias toward basic and acidic residues. Low complexity predominate over residues 46-60 (GPCTTSCQSQQQPSG). The segment covering 70-80 (HSRDDRDDRGP) has biased composition (basic and acidic residues). LRR repeat units lie at residues 101–123 (ALNDTLYLHFKGFDRIENLEEYT), 124–145 (GLRCLWLECNGIQRIENLQAQS), 146–167 (ELRCLFLQVNLLHKIENLEPLQ), 168–189 (KLDALNLSNNYIKTIENLSCLP), 190–211 (VLNTLQMAHNRLETVADIEHLR), and 215–236 (QLCVLDLSHNSLSDPEILSVLE). Residues 249-288 (NPVTKHIPNYRRTVTVRLKHLTYLDDRPVFPKDRACAEAW) form the LRRCT domain. Over residues 326 to 344 (EERKKARDRGETPLPESEK) the composition is skewed to basic and acidic residues. 2 disordered regions span residues 326–364 (EERKKARDRGETPLPESEKSIPTSPEAQEKPPKGETQQK) and 404–436 (LSGNLAHTQTPVVVTPEEVTSPVEATDGARTED). At S349 the chain carries Phosphoserine. Residues 352 to 364 (AQEKPPKGETQQK) show a composition bias toward basic and acidic residues. Residues 413 to 427 (TPVVVTPEEVTSPVE) show a composition bias toward low complexity. T462 is subject to Phosphothreonine. 2 positions are modified to phosphoserine: S465 and S488. 2 stretches are compositionally biased toward polar residues: residues 538–555 (TTDLETQSQDPSTASSHP) and 568–592 (GESNQPLPPQSCASDPTLAQSSEGG). The disordered stretch occupies residues 538–633 (TTDLETQSQD…GLEDIEFGLD (96 aa)).

It belongs to the DNAAF1 family.

The protein localises to the cell projection. It localises to the cilium. Functionally, cilium-specific protein required for the stability of the ciliary architecture. Plays a role in cytoplasmic preassembly of dynein arms. Involved in regulation of microtubule-based cilia and actin-based brush border microvilli. This Rattus norvegicus (Rat) protein is Dynein axonemal assembly factor 1 (Dnaaf1).